A 186-amino-acid polypeptide reads, in one-letter code: Small ribosomal subunit protein uS5 (186 aa).

The S5 DRBM domain occupies 20–83 (FVDKLVHINR…EAAKRDMIFV (64 aa)).

This sequence belongs to the universal ribosomal protein uS5 family. As to quaternary structure, part of the 30S ribosomal subunit. Contacts proteins S4 and S8.

In terms of biological role, with S4 and S12 plays an important role in translational accuracy. Located at the back of the 30S subunit body where it stabilizes the conformation of the head with respect to the body. This is Small ribosomal subunit protein uS5 from Brucella abortus (strain S19).